We begin with the raw amino-acid sequence, 92 residues long: Cell division protein FtsL (92 aa).

Over 1–3 (MGR) the chain is Cytoplasmic. A helical membrane pass occupies residues 4 to 21 (ISLIVAALLMLSAISLVT). Topologically, residues 22-92 (SRYQSRQLFI…YMNQPAGGAQ (71 aa)) are periplasmic.

This sequence belongs to the FtsL family. Part of a complex composed of FtsB, FtsL and FtsQ.

The protein localises to the cell inner membrane. Its function is as follows. Essential cell division protein. May link together the upstream cell division proteins, which are predominantly cytoplasmic, with the downstream cell division proteins, which are predominantly periplasmic. In Bordetella pertussis (strain Tohama I / ATCC BAA-589 / NCTC 13251), this protein is Cell division protein FtsL.